The following is an 804-amino-acid chain: Phenylalanine--tRNA ligase beta subunit (804 aa).

The region spanning 40–161 (FSMIDYLIIG…KANLGDTEVY (122 aa)) is the tRNA-binding domain. The region spanning 413–486 (EYHQQVKVNY…KILNINLFQP (74 aa)) is the B5 domain. Aspartate 464, aspartate 470, glutamate 473, and glutamate 474 together coordinate Mg(2+). One can recognise an FDX-ACB domain in the interval 710–804 (DHYQEVTRDI…DLMKTKQILI (95 aa)).

This sequence belongs to the phenylalanyl-tRNA synthetase beta subunit family. Type 1 subfamily. Tetramer of two alpha and two beta subunits. The cofactor is Mg(2+).

The protein localises to the cytoplasm. The enzyme catalyses tRNA(Phe) + L-phenylalanine + ATP = L-phenylalanyl-tRNA(Phe) + AMP + diphosphate + H(+). The protein is Phenylalanine--tRNA ligase beta subunit of Mycoplasmoides gallisepticum (strain R(low / passage 15 / clone 2)) (Mycoplasma gallisepticum).